A 305-amino-acid polypeptide reads, in one-letter code: MNSKFYHRSRLFLTFGEASEIWLSTLSPLTRKNYASGIKFLVSLKVLDLTKTLDNAISFDHSESLFKIKSLTIFNGKPVSEASKQARAACYISFTKFLYRLTKGYINPAIPLKDFGNTTFFKIRDRVKTVSISKKEWTVFFEALRLVSYRDYLIGKLIVQGIRKLDEILSLCMEDLFFASNQISFRIKKRQNKEINIPITFPFSLMKELKDYVGGRNGRVFISEDGSPIATSQVVHNFKIAALRSAMTTKITPRVLRASALIHLKQMGLRDEEIMRVSCLSSKQSLCSYVCSGGNSSVANIPTIL.

Positions 13–99 constitute a Core-binding (CB) domain; sequence LTFGEASEIW…CYISFTKFLY (87 aa). The Tyr recombinase domain maps to 127–303; that stretch reads VKTVSISKKE…GNSSVANIPT (177 aa). Active-site residues include Lys188 and Arg257. The O-(3'-phospho-DNA)-tyrosine intermediate role is filled by Tyr289.

This sequence belongs to the 'phage' integrase family.

The polypeptide is Virulence plasmid integrase pGP7-D (Chlamydia muridarum (strain MoPn / Nigg)).